The chain runs to 335 residues: Mitochondrial carrier protein CoAc2 (335 aa).

The next 6 membrane-spanning stretches (helical) occupy residues 12–32, 75–95, 119–139, 187–207, 225–242, and 280–302; these read SGPG…AGGV, FYRG…LHYM, LVAG…LDLV, GMAP…YFYE, LGCG…TYPL, and LFSG…FTVY. Solcar repeat units lie at residues 17 to 103, 113 to 212, and 219 to 308; these read PLAV…YRRW, QGPV…MKSH, and KGII…MKVC.

This sequence belongs to the mitochondrial carrier (TC 2.A.29) family. In terms of tissue distribution, expressed throughout the plant.

The protein resides in the mitochondrion inner membrane. Its function is as follows. Required for the accumulation of coenzyme A in the mitochondrial matrix. This is Mitochondrial carrier protein CoAc2 from Zea mays (Maize).